Here is a 360-residue protein sequence, read N- to C-terminus: Thioredoxin domain-containing protein 15 (360 aa).

The signal sequence occupies residues 1 to 32; sequence MVPAAGRRPPRVMRLLGWWQVLLWVLGLPVRG. The Extracellular segment spans residues 33-321; the sequence is VEVAEESGRL…GPLPSTLIKS (289 aa). A disordered region spans residues 141-173; it reads PDREEEYYTEPEVAESDAAPTEDSNNTESLKSP. Residues 143-155 show a composition bias toward acidic residues; that stretch reads REEEYYTEPEVAE. The Thioredoxin domain occupies 153 to 296; it reads VAESDAAPTE…LKIFIFNQTG (144 aa). Asparagine 187, asparagine 194, asparagine 206, and asparagine 293 each carry an N-linked (GlcNAc...) asparagine glycan. The helical transmembrane segment at 322 to 342 threads the bilayer; that stretch reads VDWLLVFSLFFLISFIMYATI. Residues 343–360 are Cytoplasmic-facing; that stretch reads RTESIRWLIPGQEQEHVE.

The protein resides in the cell projection. It localises to the cilium membrane. Functionally, acts as a positive regulator of ciliary hedgehog signaling. Involved in ciliogenesis. This Homo sapiens (Human) protein is Thioredoxin domain-containing protein 15 (TXNDC15).